We begin with the raw amino-acid sequence, 201 residues long: Small ribosomal subunit protein uS4c (201 aa).

The tract at residues Arg14–Gln43 is disordered. In terms of domain architecture, S4 RNA-binding spans Met89–Leu169.

It belongs to the universal ribosomal protein uS4 family. As to quaternary structure, part of the 30S ribosomal subunit. Contacts protein S5. The interaction surface between S4 and S5 is involved in control of translational fidelity.

It localises to the plastid. The protein resides in the chloroplast. One of the primary rRNA binding proteins, it binds directly to 16S rRNA where it nucleates assembly of the body of the 30S subunit. Functionally, with S5 and S12 plays an important role in translational accuracy. This chain is Small ribosomal subunit protein uS4c (rps4), found in Gossypium hirsutum (Upland cotton).